The following is a 449-amino-acid chain: Ribulose bisphosphate carboxylase large chain (449 aa).

The residue at position 7 (lysine 7) is an N6,N6,N6-trimethyllysine. The substrate site is built by asparagine 116 and threonine 166. The active-site Proton acceptor is lysine 168. Lysine 170 is a binding site for substrate. The Mg(2+) site is built by lysine 194, aspartate 196, and glutamate 197. Lysine 194 is subject to N6-carboxylysine. Histidine 287 acts as the Proton acceptor in catalysis. 3 residues coordinate substrate: arginine 288, histidine 320, and serine 372.

Belongs to the RuBisCO large chain family. Type I subfamily. Heterohexadecamer of 8 large chains and 8 small chains; disulfide-linked. The disulfide link is formed within the large subunit homodimers. Mg(2+) serves as cofactor. The disulfide bond which can form in the large chain dimeric partners within the hexadecamer appears to be associated with oxidative stress and protein turnover.

The protein resides in the plastid. It localises to the chloroplast. The catalysed reaction is 2 (2R)-3-phosphoglycerate + 2 H(+) = D-ribulose 1,5-bisphosphate + CO2 + H2O. It catalyses the reaction D-ribulose 1,5-bisphosphate + O2 = 2-phosphoglycolate + (2R)-3-phosphoglycerate + 2 H(+). In terms of biological role, ruBisCO catalyzes two reactions: the carboxylation of D-ribulose 1,5-bisphosphate, the primary event in carbon dioxide fixation, as well as the oxidative fragmentation of the pentose substrate in the photorespiration process. Both reactions occur simultaneously and in competition at the same active site. In Liriope muscari (Big blue lilyturf), this protein is Ribulose bisphosphate carboxylase large chain.